Here is a 77-residue protein sequence, read N- to C-terminus: Omega-conotoxin-like 6 (77 aa).

The first 22 residues, 1–22 (MKLTCVVIIAVLLLTACQLITA), serve as a signal peptide directing secretion. A propeptide spanning residues 23–50 (DDSRGVQKHRSLRSTTKVSKSTSCMEAG) is cleaved from the precursor. Disulfide bonds link cysteine 46–cysteine 61, cysteine 53–cysteine 64, and cysteine 60–cysteine 71.

Belongs to the conotoxin O1 superfamily. Expressed by the venom duct.

It is found in the secreted. Omega-conotoxins act at presynaptic membranes, they bind and block voltage-gated calcium channels (Cav). The protein is Omega-conotoxin-like 6 of Conus striatus (Striated cone).